Here is a 468-residue protein sequence, read N- to C-terminus: UDP-N-acetylmuramoyl-L-alanine--L-glutamate ligase (468 aa).

An ATP-binding site is contributed by 122–128 (GTKGKST).

Belongs to the MurCDEF family. MurD2 subfamily.

It localises to the cytoplasm. It catalyses the reaction UDP-N-acetyl-alpha-D-muramoyl-L-alanine + L-glutamate + ATP = UDP-N-acetyl-alpha-D-muramoyl-L-alanyl-L-glutamate + ADP + phosphate + H(+). The protein operates within cell wall biogenesis; peptidoglycan biosynthesis. Its function is as follows. Cell wall formation. Catalyzes the addition of L-glutamate to the nucleotide precursor UDP-N-acetylmuramoyl-L-alanine. The polypeptide is UDP-N-acetylmuramoyl-L-alanine--L-glutamate ligase (Xanthomonas axonopodis pv. citri (strain 306)).